Here is a 58-residue protein sequence, read N- to C-terminus: Large ribosomal subunit protein eL24 (58 aa).

Zn(2+) is bound by residues cysteine 6, cysteine 9, cysteine 32, and cysteine 36. The C4-type zinc finger occupies 6–36; it reads CSFCGAEIPPGYGIMYVRNDGTIQRYCSRKC.

This sequence belongs to the eukaryotic ribosomal protein eL24 family. Part of the 50S ribosomal subunit. Forms a cluster with proteins L3 and L14. It depends on Zn(2+) as a cofactor.

In terms of biological role, binds to the 23S rRNA. This chain is Large ribosomal subunit protein eL24, found in Pyrobaculum neutrophilum (strain DSM 2338 / JCM 9278 / NBRC 100436 / V24Sta) (Thermoproteus neutrophilus).